Here is a 57-residue protein sequence, read N- to C-terminus: MAVPFRRTSKTRKRLRRTHFKLQVPGMVECPNCGEMKLAHRVCKSCGTYKGREVVNK.

This sequence belongs to the bacterial ribosomal protein bL32 family.

In Geobacillus sp. (strain WCH70), this protein is Large ribosomal subunit protein bL32.